We begin with the raw amino-acid sequence, 268 residues long: DNA repair protein RecO (268 aa).

This sequence belongs to the RecO family.

Involved in DNA repair and RecF pathway recombination. This is DNA repair protein RecO from Mycobacterium leprae (strain Br4923).